The following is a 509-amino-acid chain: Bifunctional purine biosynthesis protein PurH (509 aa).

The MGS-like domain maps to 1 to 144 (MKRALLSVSD…KNARDVIVVV (144 aa)).

It belongs to the PurH family.

It catalyses the reaction (6R)-10-formyltetrahydrofolate + 5-amino-1-(5-phospho-beta-D-ribosyl)imidazole-4-carboxamide = 5-formamido-1-(5-phospho-D-ribosyl)imidazole-4-carboxamide + (6S)-5,6,7,8-tetrahydrofolate. It carries out the reaction IMP + H2O = 5-formamido-1-(5-phospho-D-ribosyl)imidazole-4-carboxamide. The protein operates within purine metabolism; IMP biosynthesis via de novo pathway; 5-formamido-1-(5-phospho-D-ribosyl)imidazole-4-carboxamide from 5-amino-1-(5-phospho-D-ribosyl)imidazole-4-carboxamide (10-formyl THF route): step 1/1. It participates in purine metabolism; IMP biosynthesis via de novo pathway; IMP from 5-formamido-1-(5-phospho-D-ribosyl)imidazole-4-carboxamide: step 1/1. This is Bifunctional purine biosynthesis protein PurH from Oenococcus oeni (strain ATCC BAA-331 / PSU-1).